Consider the following 1199-residue polypeptide: DNA-directed RNA polymerase subunit beta' (1199 aa).

Zn(2+) contacts are provided by Cys60, Cys62, Cys75, and Cys78. Residues Asp449, Asp451, and Asp453 each contribute to the Mg(2+) site. Residues Cys818, Cys892, Cys899, and Cys902 each contribute to the Zn(2+) site.

The protein belongs to the RNA polymerase beta' chain family. The RNAP catalytic core consists of 2 alpha, 1 beta, 1 beta' and 1 omega subunit. When a sigma factor is associated with the core the holoenzyme is formed, which can initiate transcription. The cofactor is Mg(2+). Zn(2+) serves as cofactor.

The catalysed reaction is RNA(n) + a ribonucleoside 5'-triphosphate = RNA(n+1) + diphosphate. In terms of biological role, DNA-dependent RNA polymerase catalyzes the transcription of DNA into RNA using the four ribonucleoside triphosphates as substrates. The polypeptide is DNA-directed RNA polymerase subunit beta' (Bacillus pumilus (strain SAFR-032)).